The following is a 1883-amino-acid chain: Transmembrane protein 131 (1883 aa).

The N-terminal stretch at 1-22 (MGKRAGGGATGATTAAVSTSAG) is a signal peptide. The Lumenal portion of the chain corresponds to 23-1117 (AGLEPAAARS…AEALPRPNWE (1095 aa)). The papD-L domain stretch occupies residues 109–283 (RFEPPMLDFH…ETKGVMRASF (175 aa)). N-linked (GlcNAc...) asparagine glycosylation occurs at asparagine 300. Phosphoserine is present on serine 803. A helical membrane pass occupies residues 1118-1138 (LALYIIISGIMSALFLLVIGT). The Cytoplasmic segment spans residues 1139-1883 (AYLEAQGIWE…WSNSHFPHEN (745 aa)). Disordered stretches follow at residues 1198–1580 (GAGG…DSLY), 1593–1656 (LKQR…KNGN), 1670–1712 (PGGN…PVSN), 1766–1789 (WESP…HTAT), and 1832–1858 (MGTE…TYNP). The span at 1237–1261 (AKNSSSTSSRTSAQAASSQSANKTS) shows a compositional bias: low complexity. Positions 1302-1316 (PQPPLPPPVPQPQEP) are enriched in pro residues. A phosphoserine mark is found at serine 1322 and serine 1342. Composition is skewed to basic and acidic residues over residues 1330–1343 (SHPE…HSSE) and 1353–1364 (AMDKDFDHHDSP). Serine 1375 is subject to Phosphoserine. Basic residues predominate over residues 1380-1394 (SKGKGKPLQRKVKPP). The segment covering 1395–1417 (KKQEEKEKKGKGKPQEDELKDSL) has biased composition (basic and acidic residues). The segment covering 1423-1434 (SSTTTETSNPDT) has biased composition (low complexity). The segment covering 1436–1458 (PLLKEDTEKQKGKQAMPEKHESE) has biased composition (basic and acidic residues). Composition is skewed to polar residues over residues 1510-1526 (AMTS…TKGT) and 1542-1553 (PNSQELGNTSSS). The span at 1602–1611 (PASPSPPAAP) shows a compositional bias: pro residues. Positions 1619 to 1630 (SYSSIVNSSSSS) are enriched in low complexity. The span at 1678-1690 (VSSNKTGFSSSLG) shows a compositional bias: polar residues. Low complexity-rich tracts occupy residues 1773-1784 (PSPSWPASSGSP) and 1837-1849 (SPAP…SSPA). A phosphoserine mark is found at serine 1863 and serine 1871.

Belongs to the TMEM131 family. Interacts (via PapD-L domain) with COL1A2 (via C-terminus); the interaction is direct, may occur with other collagen proteins, and is involved in assembly and TRAPPIII ER-to-Golgi transport complex-dependent secretion of collagen. Interacts (via C-terminus) with TRAPPC8 (via C-terminus); the interaction is direct.

The protein localises to the membrane. Functionally, collagen binding transmembrane protein involved in collagen secretion by recruiting the ER-to-Golgi transport complex TRAPPIII. May play a role in the immune response to viral infection. The sequence is that of Transmembrane protein 131 from Homo sapiens (Human).